The primary structure comprises 533 residues: Nuclear receptor corepressor 1 (533 aa).

A compositionally biased stretch (basic and acidic residues) spans 1–17; the sequence is KDKGPPPKSRYEEELRT. The disordered stretch occupies residues 1 to 21; it reads KDKGPPPKSRYEEELRTRGKT. Residues 29–33 carry the CORNR box 1 motif; sequence IDVII. Residues 37–144 are disordered; the sequence is IASDKDARER…EGMGQVPRTH (108 aa). Basic and acidic residues predominate over residues 38–47; it reads ASDKDARERG. Residues 48–59 are compositionally biased toward low complexity; sequence SQSSDSSSSLSS. Residues Ser-73 and Ser-77 each carry the phosphoserine modification. The interval 130 to 209 is ID1; the sequence is PSSQAEGMGQ…QSQTVLHPRP (80 aa). Positions 145–148 are required for interaction with RARA in the absence of its ligand; that stretch reads RLIT. The CORNR box 2 motif lies at 153-157; the sequence is ICQII. Low complexity predominate over residues 165–180; that stretch reads QVPSQPSTSTFQTSPS. Residues 165 to 254 form a disordered region; that stretch reads QVPSQPSTST…SPPQGPAVHE (90 aa). Residues 181 to 204 show a composition bias toward polar residues; that stretch reads ALSSTPVRTKPSSRYSPESQSQTV. Residues Ser-196, Ser-214, Ser-230, Ser-245, and Ser-278 each carry the phosphoserine modification. Residues 218–236 show a composition bias toward basic and acidic residues; sequence LVDKSRGSRPGKSPERSHI. Residues 306–367 are ID2; the sequence is IFRKLNSSGG…EDIIRKALMG (62 aa). The CORNR box 3 motif lies at 357 to 361; the sequence is LEDII. The segment covering 382 to 399 has biased composition (low complexity); sequence HPVGVVPGSASTSVVTSS. The disordered stretch occupies residues 382–476; it reads HPVGVVPGSA…RPSSTGSTQF (95 aa). Thr-492 carries the post-translational modification Phosphothreonine. 2 positions are modified to phosphoserine: Ser-529 and Ser-531.

The protein belongs to the N-CoR nuclear receptor corepressors family. In terms of assembly, forms a large corepressor complex that contains SIN3A/B and histone deacetylases HDAC1 and HDAC2. This complex associates with the thyroid receptor (TR) and the retinoid acid receptor (RAR) in the absence of ligand. Interacts directly with RARA; the interaction is facilitated with RARA trimethylation. Component of the N-Cor repressor complex, at least composed of CBFA2T3, HEXIM1, NCOR1, NCOR2, HDAC3, TBL1X, TBL1XR1, CORO2A and GPS2. Interacts with ZBTB33; the interaction serves to recruit the N-CoR complex to promoter regions containing methylated CpG dinucleotides. Interacts with TRIM28 and KDM3A. Interacts (via the RD1 domain) with BAZ1A (via its N-terminal); the interaction corepresses a number of NCOR1-regulated genes. Interacts with BCL6, C1D, DACH1, HEXIM1, HDAC7, RORA, RORC, SAP30, SIAH2, SIN3A and SIN3B. May interact with DEAF1. Interacts with RXRA. Interacts with SETD5. Interacts with VDR. Interacts with ZBTB7A. Interacts with AR. Interacts with HDAC3. In terms of processing, ubiquitinated; mediated by SIAH2 and leading to its subsequent proteasomal degradation.

The protein localises to the nucleus. In terms of biological role, mediates transcriptional repression by certain nuclear receptors. Part of a complex which promotes histone deacetylation and the formation of repressive chromatin structures which may impede the access of basal transcription factors. Participates in the transcriptional repressor activity produced by BCL6. Recruited by ZBTB7A to the androgen response elements/ARE on target genes, negatively regulates androgen receptor signaling and androgen-induced cell proliferation. Mediates the NR1D1-dependent repression and circadian regulation of TSHB expression. The NCOR1-HDAC3 complex regulates the circadian expression of the core clock gene ARTNL/BMAL1 and the genes involved in lipid metabolism in the liver. This Rattus norvegicus (Rat) protein is Nuclear receptor corepressor 1 (Ncor1).